A 296-amino-acid polypeptide reads, in one-letter code: tRNA dimethylallyltransferase (296 aa).

11–18 (GPTAVGKT) serves as a coordination point for ATP. Substrate is bound at residue 13-18 (TAVGKT). Residues 36–39 (DSQQ) form an interaction with substrate tRNA region.

Belongs to the IPP transferase family. In terms of assembly, monomer. Requires Mg(2+) as cofactor.

The catalysed reaction is adenosine(37) in tRNA + dimethylallyl diphosphate = N(6)-dimethylallyladenosine(37) in tRNA + diphosphate. Catalyzes the transfer of a dimethylallyl group onto the adenine at position 37 in tRNAs that read codons beginning with uridine, leading to the formation of N6-(dimethylallyl)adenosine (i(6)A). This Streptococcus equi subsp. equi (strain 4047) protein is tRNA dimethylallyltransferase.